A 371-amino-acid chain; its full sequence is DNA replication and repair protein RecF (371 aa).

30–37 provides a ligand contact to ATP; the sequence is GSNGQGKT.

The protein belongs to the RecF family.

The protein resides in the cytoplasm. Its function is as follows. The RecF protein is involved in DNA metabolism; it is required for DNA replication and normal SOS inducibility. RecF binds preferentially to single-stranded, linear DNA. It also seems to bind ATP. The polypeptide is DNA replication and repair protein RecF (Acidothermus cellulolyticus (strain ATCC 43068 / DSM 8971 / 11B)).